The following is a 542-amino-acid chain: Malate synthase, glyoxysomal (542 aa).

Residue R168 is the Proton acceptor of the active site. The Proton donor role is filled by D449. Residues S540–L542 carry the Microbody targeting signal motif.

This sequence belongs to the malate synthase family.

The protein localises to the glyoxysome. The enzyme catalyses glyoxylate + acetyl-CoA + H2O = (S)-malate + CoA + H(+). It participates in carbohydrate metabolism; glyoxylate cycle; (S)-malate from isocitrate: step 2/2. The polypeptide is Malate synthase, glyoxysomal (acu-9) (Neurospora crassa (strain ATCC 24698 / 74-OR23-1A / CBS 708.71 / DSM 1257 / FGSC 987)).